Reading from the N-terminus, the 530-residue chain is Probable histone-arginine methyltransferase CARMER (530 aa).

Residues 141–450 (ASQYFQFYGY…QSYDVTIDLH (310 aa)) form the SAM-dependent MTase PRMT-type domain. S-adenosyl-L-methionine is bound by residues glutamine 154, arginine 163, glycine 187, glutamate 209, glutamate 238, and threonine 266. Arginine 501 bears the Asymmetric dimethylarginine; by autocatalysis mark.

Belongs to the class I-like SAM-binding methyltransferase superfamily. Protein arginine N-methyltransferase family. In terms of assembly, homodimer. Interacts with EcR. Post-translationally, the dimethylated protein is the major form. As to expression, present ubiquitously (at protein level). Expressed in the imaginal disks and in larval brains, and to a much lesser degree in the polytene larval tissue such as salivary glands.

The protein localises to the cytoplasm. The protein resides in the nucleus. It carries out the reaction L-arginyl-[protein] + 2 S-adenosyl-L-methionine = N(omega),N(omega)-dimethyl-L-arginyl-[protein] + 2 S-adenosyl-L-homocysteine + 2 H(+). Functionally, methylates (mono- and asymmetric dimethylation) the guanidino nitrogens of arginyl residues in proteins. May methylate histone H3 at 'Arg-17' and activate transcription via chromatin remodeling. Coordinates ecdysone-mediated expression of cell death genes. The protein is Probable histone-arginine methyltransferase CARMER (Art4) of Drosophila melanogaster (Fruit fly).